Here is a 154-residue protein sequence, read N- to C-terminus: Stigma-specific STIG1-like protein 3 (154 aa).

Positions 1 to 23 are cleaved as a signal peptide; it reads MGHRNTVLTILLTISIAIMVLIA.

It belongs to the STIG1 family.

The chain is Stigma-specific STIG1-like protein 3 from Arabidopsis thaliana (Mouse-ear cress).